The chain runs to 89 residues: Probable Fe(2+)-trafficking protein (89 aa).

This sequence belongs to the Fe(2+)-trafficking protein family.

Could be a mediator in iron transactions between iron acquisition and iron-requiring processes, such as synthesis and/or repair of Fe-S clusters in biosynthetic enzymes. The protein is Probable Fe(2+)-trafficking protein of Legionella pneumophila (strain Lens).